The following is a 262-amino-acid chain: Shikimate dehydrogenase (NADP(+)) (262 aa).

Shikimate-binding positions include 14–16 and T60; that span reads SAS. K64 serves as the catalytic Proton acceptor. Residues N85 and D100 each coordinate shikimate. Residues 121–125, 145–150, and F203 contribute to the NADP(+) site; these read GAGGA and NRTAER. Y205 is a binding site for shikimate. G227 provides a ligand contact to NADP(+).

The protein belongs to the shikimate dehydrogenase family. Homodimer.

It catalyses the reaction shikimate + NADP(+) = 3-dehydroshikimate + NADPH + H(+). It participates in metabolic intermediate biosynthesis; chorismate biosynthesis; chorismate from D-erythrose 4-phosphate and phosphoenolpyruvate: step 4/7. Functionally, involved in the biosynthesis of the chorismate, which leads to the biosynthesis of aromatic amino acids. Catalyzes the reversible NADPH linked reduction of 3-dehydroshikimate (DHSA) to yield shikimate (SA). This is Shikimate dehydrogenase (NADP(+)) from Pyrobaculum aerophilum (strain ATCC 51768 / DSM 7523 / JCM 9630 / CIP 104966 / NBRC 100827 / IM2).